Consider the following 183-residue polypeptide: SAGA-associated factor 11 homolog (183 aa).

The SGF11-type zinc-finger motif lies at 98-119; that stretch reads CSCPNCNRIVAASRFAPHLEKC. Positions 140 to 167 are disordered; sequence GGNYFGADEDDEDDADWSGEKRKKKIAP. The segment covering 146–156 has biased composition (acidic residues); sequence ADEDDEDDADW.

Belongs to the SGF11 family. In terms of assembly, component of some SAGA transcription coactivator-HAT complexes. Within the SAGA complex, participates in a subcomplex of SAGA called the DUB module (deubiquitination module).

The protein localises to the nucleus. Functionally, component of the transcription regulatory histone acetylation (HAT) complex SAGA, a multiprotein complex that activates transcription by remodeling chromatin and mediating histone acetylation and deubiquitination. Within the SAGA complex, participates in a subcomplex that specifically deubiquitinates histone H2B. The SAGA complex is recruited to specific gene promoters by activators, where it is required for transcription. The polypeptide is SAGA-associated factor 11 homolog (Culex quinquefasciatus (Southern house mosquito)).